An 837-amino-acid chain; its full sequence is Anaphase-promoting complex subunit 2 (837 aa).

Phosphoserine is present on residues Ser233, Ser329, Ser485, Ser549, and Ser712. Positions 478–508 (CLETGQDSEDDSGEPEDWVPDPVDADPVKSS) are disordered. The segment covering 483–496 (QDSEDDSGEPEDWV) has biased composition (acidic residues). Tyr825 is subject to Phosphotyrosine.

It belongs to the cullin family. The mammalian APC/C is composed at least of 14 distinct subunits ANAPC1, ANAPC2, CDC27/APC3, ANAPC4, ANAPC5, CDC16/APC6, ANAPC7, CDC23/APC8, ANAPC10, ANAPC11, CDC26/APC12, ANAPC13, ANAPC15 and ANAPC16 that assemble into a complex of at least 19 chains with a combined molecular mass of around 1.2 MDa; APC/C interacts with FZR1 and FBXO5. In the context of the APC/C complex, directly interacts with UBE2C and UBE2S. Interacts (via cullin domain) with ANAPC11 and with UBCH10. Interacts with NEUROD2. Interacts with FBXO43; the interaction is direct.

Its pathway is protein modification; protein ubiquitination. In terms of biological role, together with the RING-H2 protein ANAPC11, constitutes the catalytic component of the anaphase promoting complex/cyclosome (APC/C), a cell cycle-regulated E3 ubiquitin ligase that controls progression through mitosis and the G1 phase of the cell cycle. The APC/C complex acts by mediating ubiquitination and subsequent degradation of target proteins: it mainly mediates the formation of 'Lys-11'-linked polyubiquitin chains and, to a lower extent, the formation of 'Lys-48'- and 'Lys-63'-linked polyubiquitin chains. The APC/C complex catalyzes assembly of branched 'Lys-11'-/'Lys-48'-linked branched ubiquitin chains on target proteins. The CDC20-APC/C complex positively regulates the formation of synaptic vesicle clustering at active zone to the presynaptic membrane in postmitotic neurons. CDC20-APC/C-induced degradation of NEUROD2 drives presynaptic differentiation. The sequence is that of Anaphase-promoting complex subunit 2 (Anapc2) from Mus musculus (Mouse).